Reading from the N-terminus, the 377-residue chain is Probable protein phosphatase 2C 7 (377 aa).

2 disordered regions span residues 1–68 and 80–99; these read MAAH…GKAA and TTVAEATATGPPKGSDEDDE. Low complexity predominate over residues 21-39; the sequence is PPAAEAEAAAAAAAIARAA. Basic residues predominate over residues 51-63; the sequence is GVRHPLKHRRFRA. Residues 80-89 are compositionally biased toward low complexity; that stretch reads TTVAEATATG. One can recognise a PPM-type phosphatase domain in the interval 115 to 361; that stretch reads SCGYSSFRGR…DNITCIVVKF (247 aa). Mn(2+) is bound by residues Asp-151, Gly-152, Asp-313, and Asp-352.

It belongs to the PP2C family. It depends on Mg(2+) as a cofactor. Mn(2+) serves as cofactor.

The enzyme catalyses O-phospho-L-seryl-[protein] + H2O = L-seryl-[protein] + phosphate. The catalysed reaction is O-phospho-L-threonyl-[protein] + H2O = L-threonyl-[protein] + phosphate. In Oryza sativa subsp. japonica (Rice), this protein is Probable protein phosphatase 2C 7.